The chain runs to 215 residues: Interleukin-12 subunit alpha (215 aa).

The first 22 residues, 1 to 22 (MCQSRYLLFLATLALLNHLSLA), serve as a signal peptide directing secretion. Disulfide bonds link Cys33–Cys106, Cys60–Cys192, and Cys81–Cys119. N-linked (GlcNAc...) asparagine glycosylation is present at Asn89.

Belongs to the IL-6 superfamily. In terms of assembly, heterodimer with IL12B; disulfide-linked. This heterodimer is known as interleukin IL-12. Heterodimer with EBI3/IL27B; not disulfide-linked. This heterodimer is known as interleukin IL-35. Interacts with NBR1; this interaction promotes IL-12 secretion.

It localises to the secreted. Its function is as follows. Heterodimerizes with IL12B to form the IL-12 cytokine or with EBI3/IL27B to form the IL-35 cytokine. IL-12 is primarily produced by professional antigen-presenting cells (APCs) such as B-cells and dendritic cells (DCs) as well as macrophages and granulocytes and regulates T-cell and natural killer-cell responses, induces the production of interferon-gamma (IFN-gamma), favors the differentiation of T-helper 1 (Th1) cells and is an important link between innate resistance and adaptive immunity. Mechanistically, exerts its biological effects through a receptor composed of IL12R1 and IL12R2 subunits. Binding to the receptor results in the rapid tyrosine phosphorylation of a number of cellular substrates including the JAK family kinases TYK2 and JAK2. In turn, recruited STAT4 gets phosphorylated and translocates to the nucleus where it regulates cytokine/growth factor responsive genes. As part of IL-35, plays essential roles in maintaining the immune homeostasis of the liver microenvironment and also functions as an immune-suppressive cytokine. Mediates biological events through unconventional receptors composed of IL12RB2 and gp130/IL6ST heterodimers or homodimers. Signaling requires the transcription factors STAT1 and STAT4, which form a unique heterodimer that binds to distinct DNA sites. This chain is Interleukin-12 subunit alpha (Il12a), found in Mus musculus (Mouse).